Here is an 84-residue protein sequence, read N- to C-terminus: Acid stress protein IbaG (84 aa).

The protein belongs to the BolA/IbaG family.

In terms of biological role, involved in cell resistance against acid stress. The sequence is that of Acid stress protein IbaG from Escherichia coli O6:H1 (strain CFT073 / ATCC 700928 / UPEC).